Reading from the N-terminus, the 125-residue chain is MRLLTHNLLSSHVRGVGPRGFPLRLQATEVRINPVEFNPDFIVRMIPKVEWAALLEAADHLHLIQVPKEPIQGYEHNEEFLRKMHHVLLEVEVLEGTLQCPESGRVFPISRGIPNMLLSDEETET.

Positions 2–119 (RLLTHNLLSS…SRGIPNMLLS (118 aa)) constitute a TRM112 domain. S119 carries the post-translational modification Phosphoserine.

The protein belongs to the TRM112 family. As to quaternary structure, part of the heterodimeric BUD23-TRM112 methyltransferase complex; this heterodimerization is necessary for the metabolic stability and activity of the catalytic subunit BUD23. Part of the heterodimeric N6AMT1-TRM112 methyltransferase complex; this heterodimerization is necessary for S-adenosyl-L-methionine-binding to N6AMT1/HEMK2. Part of the heterodimeric ALKBH8-TRM112 methyltransferase complex. Part of the heterodimeric METTL5-TRM112 methyltransferase complex; this heterodimerization is necessary for the stability of the catalytic subunit METTL5. Part of the heterodimeric THUMPD3-TRM112 methyltransferase complex; this complex forms an active tRNA methyltransferase, where TRMT112 acts as an activator of the catalytic subunit THUMPD3. Part of the heterodimeric THUMPD2-TRM112 methyltransferase complex; this complex forms an active tRNA methyltransferase, where TRMT112 acts as an activator of the catalytic subunit THUMPD2. Part of the heterodimeric TRMT11-TRM112 methyltransferase complex; this complex forms an active tRNA methyltransferase, where TRMT112 acts as an activator of the catalytic subunit TRMT11.

The protein resides in the nucleus. It is found in the nucleoplasm. Its subcellular location is the cytoplasm. It localises to the perinuclear region. Its function is as follows. Acts as an activator of both rRNA/tRNA and protein methyltransferases. Together with methyltransferase BUD23, methylates the N(7) position of a guanine in 18S rRNA. The heterodimer with HEMK2/N6AMT1 catalyzes N5-methylation of ETF1 on 'Gln-185', using S-adenosyl L-methionine as methyl donor. The heterodimer with ALKBH8 catalyzes the methylation of 5-carboxymethyl uridine to 5-methylcarboxymethyl uridine at the wobble position of the anticodon loop in target tRNA species. Together with methyltransferase THUMPD3, catalyzes the formation of N(2)-methylguanosine at position 6 in a broad range of tRNA substrates and at position 7 of tRNA(Trp). Involved in the pre-rRNA processing steps leading to small-subunit rRNA production. Together with methyltransferase METTL5, specifically methylates the 6th position of adenine in position 1832 of 18S rRNA. This Bos taurus (Bovine) protein is Multifunctional methyltransferase subunit TRM112-like protein (TRMT112).